We begin with the raw amino-acid sequence, 198 residues long: MSNLRLQKRLASAVLKCGKHRVWLDPNEVSEISGANSRQSIRRLVNDGLIIRKPVTVHSRFRAREYEEARRKGRHTGYGKRRGTANARMPEKTLWIRRMRVLRNLLRRYRDAKKLDKHLYHELYLRAKGNNFKNKKNLIEYIFKKKTENKRAKQLADQAQARRDKNKESRKRREERQVVKRAELLRKISQSEKVIAGK.

2 disordered regions span residues 66-85 and 150-177; these read YEEA…RGTA and KRAK…EERQ. Positions 71–83 are enriched in basic residues; that stretch reads RKGRHTGYGKRRG. Residues 160 to 177 are compositionally biased toward basic and acidic residues; the sequence is QARRDKNKESRKRREERQ.

The protein belongs to the eukaryotic ribosomal protein eL19 family.

This Caenorhabditis elegans protein is Large ribosomal subunit protein eL19 (rpl-19).